A 427-amino-acid polypeptide reads, in one-letter code: Serine--tRNA ligase (427 aa).

235-237 provides a ligand contact to L-serine; the sequence is TAE. ATP contacts are provided by residues 266 to 268 and V282; that span reads RRE. Position 289 (E289) interacts with L-serine. 353–356 provides a ligand contact to ATP; that stretch reads EASS. L-serine is bound at residue S389.

Belongs to the class-II aminoacyl-tRNA synthetase family. Type-1 seryl-tRNA synthetase subfamily. Homodimer. The tRNA molecule binds across the dimer.

Its subcellular location is the cytoplasm. It carries out the reaction tRNA(Ser) + L-serine + ATP = L-seryl-tRNA(Ser) + AMP + diphosphate + H(+). The catalysed reaction is tRNA(Sec) + L-serine + ATP = L-seryl-tRNA(Sec) + AMP + diphosphate + H(+). The protein operates within aminoacyl-tRNA biosynthesis; selenocysteinyl-tRNA(Sec) biosynthesis; L-seryl-tRNA(Sec) from L-serine and tRNA(Sec): step 1/1. Its function is as follows. Catalyzes the attachment of serine to tRNA(Ser). Is also able to aminoacylate tRNA(Sec) with serine, to form the misacylated tRNA L-seryl-tRNA(Sec), which will be further converted into selenocysteinyl-tRNA(Sec). The chain is Serine--tRNA ligase from Chlorobaculum parvum (strain DSM 263 / NCIMB 8327) (Chlorobium vibrioforme subsp. thiosulfatophilum).